A 349-amino-acid chain; its full sequence is Ferredoxin--NADP reductase (349 aa).

Residues D35, Q43, Y48, V88, F123, D288, and T329 each coordinate FAD.

It belongs to the ferredoxin--NADP reductase type 2 family. As to quaternary structure, homodimer. FAD is required as a cofactor.

The enzyme catalyses 2 reduced [2Fe-2S]-[ferredoxin] + NADP(+) + H(+) = 2 oxidized [2Fe-2S]-[ferredoxin] + NADPH. In Colwellia psychrerythraea (strain 34H / ATCC BAA-681) (Vibrio psychroerythus), this protein is Ferredoxin--NADP reductase.